The sequence spans 485 residues: N-succinylglutamate 5-semialdehyde dehydrogenase (485 aa).

220 to 225 (GSANTG) lines the NAD(+) pocket. Catalysis depends on residues E243 and C278.

Belongs to the aldehyde dehydrogenase family. AstD subfamily.

It catalyses the reaction N-succinyl-L-glutamate 5-semialdehyde + NAD(+) + H2O = N-succinyl-L-glutamate + NADH + 2 H(+). It participates in amino-acid degradation; L-arginine degradation via AST pathway; L-glutamate and succinate from L-arginine: step 4/5. Its function is as follows. Catalyzes the NAD-dependent reduction of succinylglutamate semialdehyde into succinylglutamate. The chain is N-succinylglutamate 5-semialdehyde dehydrogenase from Vibrio atlanticus (strain LGP32) (Vibrio splendidus (strain Mel32)).